Reading from the N-terminus, the 275-residue chain is Lectin (275 aa).

The signal sequence occupies residues M1–S30. The D-glucose site is built by D111 and G129. Residues E149 and D151 each contribute to the Mn(2+) site. Residues D151, F153, N155, and D159 each coordinate Ca(2+). Mn(2+) contacts are provided by D159 and H166. The propeptide occupies N211 to N217. 2 residues coordinate D-glucose: G246 and A247. Residues K270–A275 constitute a propeptide that is removed on maturation.

It belongs to the leguminous lectin family. Heterotetramer of two alpha and two beta chains. Post-translationally, the mature form consists of two chains, alpha and beta, produced by cleavage of the immature protein. These remain cleaved, yet fold together to form one subunit.

D-mannose specific lectin. This chain is Lectin, found in Lens culinaris (Lentil).